A 778-amino-acid polypeptide reads, in one-letter code: General transcription and DNA repair factor IIH helicase subunit XPD/RAD3 (778 aa).

Residues 7–285 (DLPVLFPYPK…KVDSQKLQDE (279 aa)) form the Helicase ATP-binding domain. 42 to 49 (MPSGTGKT) is a binding site for ATP. The [4Fe-4S] cluster site is built by cysteine 115, cysteine 133, cysteine 156, and cysteine 191. Positions 235–238 (DEAH) match the DEAH box motif. Positions 750–765 (SRKDQGGFIENENKEG) are enriched in basic and acidic residues. Positions 750–778 (SRKDQGGFIENENKEGEQDEDEDEDIEMQ) are disordered. Residues 766-778 (EQDEDEDEDIEMQ) show a composition bias toward acidic residues.

Belongs to the helicase family. RAD3/XPD subfamily. As to quaternary structure, component of the 7-subunit TFIIH core complex composed of XPB/SSL2, XPD/RAD3, SSL1, TFB1, TFB2, TFB4 and TFB5, which is active in NER. The core complex associates with the 3-subunit CTD-kinase module TFIIK composed of CCL1, KIN28 and TFB3 to form the 10-subunit holoenzyme (holo-TFIIH) active in transcription. An additionnal subunit, TFB6, plays a role in the dissociation of the SSL2 helicase from TFIIH after transcription initiation. The cofactor is [4Fe-4S] cluster. It depends on Mg(2+) as a cofactor.

It localises to the nucleus. The enzyme catalyses Couples ATP hydrolysis with the unwinding of duplex DNA at the replication fork by translocating in the 5'-3' direction. This creates two antiparallel DNA single strands (ssDNA). The leading ssDNA polymer is the template for DNA polymerase III holoenzyme which synthesizes a continuous strand.. It carries out the reaction ATP + H2O = ADP + phosphate + H(+). Its function is as follows. ATP-dependent 5'-3' DNA helicase. Component of the general transcription and DNA repair factor IIH (TFIIH) core complex, which is involved in general and transcription-coupled nucleotide excision repair (NER) of damaged DNA and, when complexed to TFIIK, in RNA transcription by RNA polymerase II. In NER, TFIIH acts by opening DNA around the lesion to allow the excision of the damaged oligonucleotide and its replacement by a new DNA fragment. The ATP-dependent helicase activity of XPD/RAD3 is required for DNA opening. In transcription, TFIIH has an essential role in transcription initiation. When the pre-initiation complex (PIC) has been established, TFIIH is required for promoter opening and promoter escape. Phosphorylation of the C-terminal tail (CTD) of the largest subunit of RNA polymerase II by the kinase module TFIIK controls the initiation of transcription. XPD/RAD3 acts by forming a bridge between TFIIK and the core-TFIIH complex. Involved in the maintenance of the fidelity of DNA replication. Has single-stranded DNA-dependent ATPase activity. 5'-3' DNA helicase activity requires ATP (dATP partially substitutes), will unwind over 800 bp dsDNA. Able to unwind an RNA:DNA hybrid. This chain is General transcription and DNA repair factor IIH helicase subunit XPD/RAD3, found in Saccharomyces cerevisiae (strain ATCC 204508 / S288c) (Baker's yeast).